The primary structure comprises 184 residues: Photosystem I assembly protein Ycf4 (184 aa).

2 helical membrane passes run 22-42 and 57-77; these read FCWA…GISS and IIFF…LFIS.

This sequence belongs to the Ycf4 family.

Its subcellular location is the plastid. It localises to the chloroplast thylakoid membrane. Functionally, seems to be required for the assembly of the photosystem I complex. The sequence is that of Photosystem I assembly protein Ycf4 from Populus alba (White poplar).